We begin with the raw amino-acid sequence, 279 residues long: Undecaprenyl-diphosphatase (279 aa).

8 consecutive transmembrane segments (helical) span residues 17-37, 46-66, 92-112, 123-143, 156-176, 197-217, 226-246, and 257-277; these read TEFLPVSSTGHLFLFSYFFPF, AFEDLFDIFIQTGAILSVVVL, FQFYLNLIVGILPILILGFLL, SDLLLILGMSWFVGGIIMVFV, IGFKESIIVGFLQCFALIPGV, AEFSFFLAIPVLTLAGIYKLY, ETIGLLLFGSIISFIICYFII, and SFISFGVYRILLGLLVILYFV.

The protein belongs to the UppP family.

The protein localises to the cell inner membrane. It catalyses the reaction di-trans,octa-cis-undecaprenyl diphosphate + H2O = di-trans,octa-cis-undecaprenyl phosphate + phosphate + H(+). Catalyzes the dephosphorylation of undecaprenyl diphosphate (UPP). Confers resistance to bacitracin. This is Undecaprenyl-diphosphatase from Leptospira biflexa serovar Patoc (strain Patoc 1 / ATCC 23582 / Paris).